Reading from the N-terminus, the 118-residue chain is Hisactophilin-1 (118 aa).

The N-myristoyl glycine moiety is linked to residue glycine 2. The interval 8-109 (SHHGHFLSAE…HVSTKEHHDH (102 aa)) is contains several HHXH repeats. 2 tandem repeats follow at residues 34 to 46 (FHVE…VALK) and 74 to 86 (FHLE…VSIK). The 2 X 13 AA approximate repeats stretch occupies residues 34–86 (FHVENHGGKVALKTHCGKYLSIGDHKQVYLSHHLHGDHSLFHLEHHGGKVSIK).

This sequence belongs to the hisactophilin family. In terms of assembly, homodimer or heterodimer of hatA and hatB, linked by a disulfide bond. In terms of processing, phosphorylated.

The protein localises to the cytoplasm. It localises to the cell membrane. In terms of biological role, may act as an intracellular pH sensor that links chemotactic signals to responses in the microfilament system of the cells by nucleating actin polymerization or stabilizing the filaments. The sequence is that of Hisactophilin-1 (hatA) from Dictyostelium discoideum (Social amoeba).